Consider the following 520-residue polypeptide: GMP synthase [glutamine-hydrolyzing] (520 aa).

The Glutamine amidotransferase type-1 domain occupies Ser-9–Asp-202. The active-site Nucleophile is the Cys-86. Catalysis depends on residues His-176 and Glu-178. Positions Trp-203 to Arg-395 constitute a GMPS ATP-PPase domain. An ATP-binding site is contributed by Ser-230–Ser-236.

As to quaternary structure, homodimer.

The catalysed reaction is XMP + L-glutamine + ATP + H2O = GMP + L-glutamate + AMP + diphosphate + 2 H(+). Its pathway is purine metabolism; GMP biosynthesis; GMP from XMP (L-Gln route): step 1/1. Catalyzes the synthesis of GMP from XMP. The protein is GMP synthase [glutamine-hydrolyzing] of Allorhizobium ampelinum (strain ATCC BAA-846 / DSM 112012 / S4) (Agrobacterium vitis (strain S4)).